The sequence spans 151 residues: Ribosomal RNA large subunit methyltransferase H (151 aa).

S-adenosyl-L-methionine-binding positions include Ala101 and 119-124 (LSEMTF).

The protein belongs to the RNA methyltransferase RlmH family. Homodimer.

It localises to the cytoplasm. The catalysed reaction is pseudouridine(1915) in 23S rRNA + S-adenosyl-L-methionine = N(3)-methylpseudouridine(1915) in 23S rRNA + S-adenosyl-L-homocysteine + H(+). Specifically methylates the pseudouridine at position 1915 (m3Psi1915) in 23S rRNA. The protein is Ribosomal RNA large subunit methyltransferase H of Helicobacter pylori (strain G27).